We begin with the raw amino-acid sequence, 186 residues long: UPF0340 protein M6_Spy1622 (186 aa).

Belongs to the UPF0340 family.

In Streptococcus pyogenes serotype M6 (strain ATCC BAA-946 / MGAS10394), this protein is UPF0340 protein M6_Spy1622.